Reading from the N-terminus, the 498-residue chain is Calcium uptake protein, mitochondrial (498 aa).

A mitochondrion-targeting transit peptide spans 1–29 (MPALSHYRSVSSLPSVDRSFLLIQRLRIH). 4 EF-hand domains span residues 216 to 241 (EFFMLFDVDNDGLISFKEYIFFVTLL), 243 to 278 (IPESSFAVAFKMFDTDNNGEIDKEEFKTVMSLMRSQ), 329 to 364 (LTEEMLRLEFAHYDYKRRGSISAKDFALSMVAAADA), and 437 to 472 (LSDNVIEIAFHVFDSNQDGNLSVDEFLRVLHRRERD). Positions 222, 224, 226, 233, 256, 258, 260, 262, and 267 each coordinate Ca(2+). Residues Asp-450, Asn-452, Asp-454, Asn-456, and Glu-461 each coordinate Ca(2+).

This sequence belongs to the MICU1 family. MICU1 subfamily. In terms of tissue distribution, expressed in both green and non-green tissues, including roots, shoots, floral buds and pollen.

The protein localises to the mitochondrion inner membrane. It localises to the mitochondrion intermembrane space. Calcium-binding protein maintaining matrix calcium levels at low concentration. Regulates mitochondrial calcium dynamics in planta by restricting influx. In Arabidopsis thaliana (Mouse-ear cress), this protein is Calcium uptake protein, mitochondrial.